The chain runs to 122 residues: MRVILAITLLFVAGSFIATASKGRNYPRFFKHRMKLREIRGFKPEYISTAIGFGKRESPAERIPDLRGRERILLPVLRNFPRGVRILVPFSQLQVDAASMSSAAKSTVYAGLGDDSKKGTIA.

Residues 1-23 (MRVILAITLLFVAGSFIATASKG) form the signal peptide. Positions 24–40 (RNYPRFFKHRMKLREIR) are excised as a propeptide. Phenylalanine 53 bears the Phenylalanine amide mark. A propeptide spanning residues 57-122 (ESPAERIPDL…GDDSKKGTIA (66 aa)) is cleaved from the precursor.

As to expression, expressed in brain and ventral ganglia but not in the retrocerebral complex (at protein level).

It localises to the secreted. In terms of biological role, neuropeptide stimulator of juvenile hormone synthesis. The protein is Allatotropin of Camponotus floridanus (Florida carpenter ant).